A 321-amino-acid polypeptide reads, in one-letter code: NADPH-dependent codeinone reductase 1-2 (321 aa).

NADPH contacts are provided by T27 and D51. Residues Y56 and H119 each act as proton donor in the active site. H119 contributes to the substrate binding site. 6 residues coordinate NADPH: S165, Q187, S214, L216, S264, and R269. The tract at residues 299–321 (SADFLLSPTGPFKTEEEFWDEKD) is disordered.

This sequence belongs to the aldo/keto reductase family. Latex secreting cells (laticifer cells). Expressed constitutively in all organs with highest levels in capsules. Restricted to the parietal region of sieve elements adjacent or proximal to laticifers in roots, stems, leaves and carpels.

It localises to the cytoplasm. Its subcellular location is the cytosol. It catalyses the reaction codeine + NADP(+) = codeinone + NADPH + H(+). It carries out the reaction neopine + NADP(+) = neopinone + NADPH + H(+). The enzyme catalyses morphine + NADP(+) = morphinone + NADPH + H(+). The catalysed reaction is neomorphine + NADP(+) = neomorphinone + NADPH + H(+). The protein operates within alkaloid biosynthesis; morphine biosynthesis. NADPH-dependent codeinone reductase involved in biosynthesis of morphinan-type benzylisoquinoline and opiate alkaloids natural products. Reduces codeinone to codeine in the penultimate step in morphine biosynthesis. Can use morphinone, hydrocodone and hydromorphone as substrate during reductive reaction with NADPH as cofactor, and morphine and dihydrocodeine as substrate during oxidative reaction with NADP as cofactor. Converts morphinone to morphine, and neomorphinone to neomorphine. Reduces irreversibly neopinone, a spontaneous isomer of codeinone, to neopine; in planta, neopine levels are limited to low levels. The polypeptide is NADPH-dependent codeinone reductase 1-2 (Papaver somniferum (Opium poppy)).